A 1237-amino-acid polypeptide reads, in one-letter code: uncharacterized protein (1237 aa).

The region spanning 591-712 (KDMLEIYSDL…IVLSKYTQWT (122 aa)) is the MHD1 domain. Residues 786–906 (LIEALDVAES…GDYLPREEWF (121 aa)) form the C2 domain. In terms of domain architecture, MHD2 spans 1014–1130 (EAAIYELLDY…KPTDFLLQEC (117 aa)).

This is an uncharacterized protein from Schizosaccharomyces pombe (strain 972 / ATCC 24843) (Fission yeast).